The primary structure comprises 58 residues: Small ribosomal subunit protein bS21 (58 aa).

A disordered region spans residues 36-58; sequence EHYEKPSVKRKKKSEAARRRKYR. The segment covering 43-58 has biased composition (basic residues); the sequence is VKRKKKSEAARRRKYR.

It belongs to the bacterial ribosomal protein bS21 family.

In Symbiobacterium thermophilum (strain DSM 24528 / JCM 14929 / IAM 14863 / T), this protein is Small ribosomal subunit protein bS21.